Here is an 887-residue protein sequence, read N- to C-terminus: MAEFSSNDIDPIETEDWIQAIKSVIREDGLERANFIINTVKKYVPYKNKVVFKKCAISNYVNTIPVEEEPNYPGDLFIEQKIRSVIRWNAIMMVLRASKKNLDLGGHLSSFQSAATIYEVCFNHFFHATNENNGGDLVYFQGHISPGIYSRAFIEDRLTQKQLDNFRQEIDGIGLSSYPHPKLMPNFWQFPTVSMGLGPICAIYQAKFLKYLEHRNLKCTNNQKVYAFLGDGEMDEPESKGAISIAAREKLDNLIFIVNCNLQRLDGPVIGNGKVIDELESVFKGCGWKVIKVIWGSKWDSLLKKDVSGKLIKLMNETLDGDYQTFKSKNGAYIRKYFFGKYLETQELVKDMSDDQIWNLDRGGHDPKKIYAALSKANSIVGKPVIILMHTVKGYGMGDIAEGKNIAHQIKKIDIKGITYIKNRFKVPVEENELKYLPYVSFDANSIEYKYLHARRKKLGGYLPIRLSNFTNFFTLPKLDEFSTLLTEQKKEISTTIVFIRILNILLRNSFIKDRIVPIIADEARTFGMEGLFRKIGIYNFIGQKYTPQDKELLAYYKEDKKGQILQEGINELGAAASWLAAATSYSTNNFPMIPFYIFYSMFGFQRIGDLFWAAGDQQARGFLIGGTSGKTTLNGEGLQHGDGHSHIQALTIPNCISYNPAYAYELAVIVHDGLQRMYGPSQENIYYYITTMNENYVMPGISKNMYEGICKGIYKLKHVGKKNVKVQIMGSGSILQCVCRAAEILLEEYDIGSDVYSVTSFTELARNGQDCDRWNLLHPTQEKKVPFVTKIMNKLPAIAVTDYMKLFSEQVRAYIPAVTYRVLGTDGFGRSDSRKNLRRYFEIDEYHIVIAVLGELEKIGDVDKNTIVNAISKFKIDINKVNPRLA.

In terms of assembly, homodimer. Part of the PDH complex, consisting of multiple copies of pyruvate dehydrogenase (E1), dihydrolipoamide acetyltransferase (E2) and lipoamide dehydrogenase (E3). The cofactor is thiamine diphosphate.

It catalyses the reaction N(6)-[(R)-lipoyl]-L-lysyl-[protein] + pyruvate + H(+) = N(6)-[(R)-S(8)-acetyldihydrolipoyl]-L-lysyl-[protein] + CO2. Functionally, component of the pyruvate dehydrogenase (PDH) complex, that catalyzes the overall conversion of pyruvate to acetyl-CoA and CO(2). The polypeptide is Pyruvate dehydrogenase E1 component (aceE) (Buchnera aphidicola subsp. Baizongia pistaciae (strain Bp)).